A 788-amino-acid polypeptide reads, in one-letter code: Leucine-rich repeat and fibronectin type-III domain-containing protein 2 (788 aa).

An N-terminal signal peptide occupies residues 1–20 (METLLGGLLAFGMAFAVVDA). The 32-residue stretch at 21–52 (CPKYCVCQNLSESLGTLCPSKGLLFVPPDIDR) folds into the LRRNT domain. At 21–534 (CPKYCVCQNL…MHSQILGGTM (514 aa)) the chain is on the extracellular side. Residues Asn29 and Asn74 are each glycosylated (N-linked (GlcNAc...) asparagine). LRR repeat units follow at residues 53 to 74 (RTVELRLGGNFIIHIGRQDFAN), 77 to 98 (GLVDLTLSRNTISHIQPFSFLD), 101 to 122 (SLRSLHLDSNRLPSLGEDTLRG), 125 to 146 (NLQHLIVNNNQLGGIADDAFED), 150 to 171 (TLEDLDLSYNNLHGLPWDSVRR), 174 to 195 (NLHQLSLDHNLLDHIAEGTFAD), and 198 to 219 (KLARLDLTSNRLQKLPPDPIFA). Positions 242-288 (NPLHCNCELLWLRRLERDDDLKTCGSPGGLKGRYFWHIREEEFVCEP) constitute an LRRCT domain. The region spanning 289 to 375 (PLITQHTHKL…GEATATVEVS (87 aa)) is the Ig-like domain. Residues Cys310 and Cys359 are joined by a disulfide bond. N-linked (GlcNAc...) asparagine glycans are attached at residues Asn332, Asn341, Asn384, and Asn457. The disordered stretch occupies residues 383-423 (SNSTSRMAPPKSRLSDITGSSKTSRGGGGSGAGEPPKSTPE). One can recognise a Fibronectin type-III domain in the interval 422–518 (PERAVLVSDV…GCAQFFTKAD (97 aa)). A helical membrane pass occupies residues 535 to 555 (ILVIGGIIVATLLVFIVILMV). Over 556–788 (RYKVCNHDAP…SSEWVMESTV (233 aa)) the chain is Cytoplasmic. The span at 620 to 641 (CDSSSSSSLGSGEAAGLSRGPW) shows a compositional bias: low complexity. Disordered stretches follow at residues 620–655 (CDSSSSSSLGSGEAAGLSRGPWRLPPPAPRPKPSLD) and 668–707 (SQRKEELLDSRTPAGRGAGTSARGHHSDREPLLGPPATRA). Residues 642–651 (RLPPPAPRPK) are compositionally biased toward pro residues. Residues 785–788 (ESTV) carry the PDZ-binding motif.

The protein belongs to the LRFN family. In terms of assembly, forms heteromeric complexes with LRFN1, LRFN3 and LRFN4. Can form homomeric complexes, but not across cell junctions. Can form heteromeric complexes with LRFN5. Interacts with DLG1, DLG3 and DLG4; interaction with DLG4 is mediated by the PDZ-binding domain. Also interacts with DLG2. Interacts with 2 NMDA receptor subunits GRIN1 and GRIN2A.

It is found in the membrane. Its subcellular location is the synapse. The protein resides in the postsynaptic cell membrane. Promotes neurite outgrowth in hippocampal neurons. Enhances the cell surface expression of GRIN1 and GRIN2A NMDA receptor subunits. May play a role in redistributing DLG4 to the cell periphery. This Rattus norvegicus (Rat) protein is Leucine-rich repeat and fibronectin type-III domain-containing protein 2 (Lrfn2).